We begin with the raw amino-acid sequence, 37 residues long: Large ribosomal subunit protein bL36 (37 aa).

This sequence belongs to the bacterial ribosomal protein bL36 family.

This is Large ribosomal subunit protein bL36 from Clostridium kluyveri (strain NBRC 12016).